The chain runs to 244 residues: Large ribosomal subunit protein uL30 (244 aa).

The tract at residues Met1 to Ala37 is disordered.

Belongs to the universal ribosomal protein uL30 family.

In terms of biological role, binds to G-rich structures in 28S rRNA and in mRNAs. Plays a regulatory role in the translation apparatus; inhibits cell-free translation of mRNAs. The protein is Large ribosomal subunit protein uL30 (rpl-7) of Caenorhabditis elegans.